The following is a 210-amino-acid chain: Large ribosomal subunit protein uL3 (210 aa).

The disordered stretch occupies residues 119–151; it reads FQGAIKRHGQSRGPMSHGSRYHRRPGSMGPVAP.

Belongs to the universal ribosomal protein uL3 family. Part of the 50S ribosomal subunit. Forms a cluster with proteins L14 and L19.

One of the primary rRNA binding proteins, it binds directly near the 3'-end of the 23S rRNA, where it nucleates assembly of the 50S subunit. In Bacillus cytotoxicus (strain DSM 22905 / CIP 110041 / 391-98 / NVH 391-98), this protein is Large ribosomal subunit protein uL3.